The primary structure comprises 238 residues: Ribonuclease PH (238 aa).

Phosphate is bound by residues Arg-86 and 124-126; that span reads GTR.

It belongs to the RNase PH family. Homohexameric ring arranged as a trimer of dimers.

The catalysed reaction is tRNA(n+1) + phosphate = tRNA(n) + a ribonucleoside 5'-diphosphate. Its function is as follows. Phosphorolytic 3'-5' exoribonuclease that plays an important role in tRNA 3'-end maturation. Removes nucleotide residues following the 3'-CCA terminus of tRNAs; can also add nucleotides to the ends of RNA molecules by using nucleoside diphosphates as substrates, but this may not be physiologically important. Probably plays a role in initiation of 16S rRNA degradation (leading to ribosome degradation) during starvation. This chain is Ribonuclease PH, found in Halorhodospira halophila (strain DSM 244 / SL1) (Ectothiorhodospira halophila (strain DSM 244 / SL1)).